The chain runs to 283 residues: Probable 3-deoxy-manno-octulosonic acid transferase (283 aa).

The protein resides in the cytoplasm. It catalyses the reaction an alpha-Kdo-(2-&gt;4)-alpha-Kdo-(2-&gt;6)-lipid IVA + CMP-3-deoxy-beta-D-manno-octulosonate = an alpha-Kdo-(2-&gt;4)-alpha-Kdo-(2-&gt;4)-alpha-Kdo-(2-&gt;6)-lipid IVA + CMP + H(+). It carries out the reaction alpha-Kdo-(2-&gt;4)-alpha-Kdo-(2-&gt;6)-lipid IVA (E. coli) + CMP-3-deoxy-beta-D-manno-octulosonate = alpha-Kdo-(2-&gt;4)-alpha-Kdo-(2-&gt;4)-alpha-Kdo-(2-&gt;6)-lipid IVA + CMP + H(+). It functions in the pathway bacterial outer membrane biogenesis; LPS core biosynthesis. It participates in bacterial outer membrane biogenesis; LOS core biosynthesis. Involved in the biosynthesis of the core oligosaccharide region of lipopolysaccharide (LPS). Required for the addition of 3-deoxy-D-manno-oct-2-ulosonic acid III (KdoIII) to the KdoII residue of the inner lipopolysaccharide core. May also play a role in a lipooligosaccharide (LOS) biosynthesis pathway. This chain is Probable 3-deoxy-manno-octulosonic acid transferase, found in Escherichia coli (strain K12).